The following is a 136-amino-acid chain: Large ribosomal subunit protein uL16 (136 aa).

Belongs to the universal ribosomal protein uL16 family. Part of the 50S ribosomal subunit.

In terms of biological role, binds 23S rRNA and is also seen to make contacts with the A and possibly P site tRNAs. The sequence is that of Large ribosomal subunit protein uL16 from Sodalis glossinidius (strain morsitans).